The following is a 354-amino-acid chain: Probable L-ascorbate-6-phosphate lactonase UlaG (354 aa).

It belongs to the UlaG family. A divalent metal cation serves as cofactor.

The protein resides in the cytoplasm. It catalyses the reaction L-ascorbate 6-phosphate + H2O = 3-dehydro-L-gulonate 6-phosphate. Its pathway is cofactor degradation; L-ascorbate degradation; D-xylulose 5-phosphate from L-ascorbate: step 1/4. Its function is as follows. Probably catalyzes the hydrolysis of L-ascorbate-6-P into 3-keto-L-gulonate-6-P. Is essential for L-ascorbate utilization under anaerobic conditions. This chain is Probable L-ascorbate-6-phosphate lactonase UlaG, found in Escherichia fergusonii (strain ATCC 35469 / DSM 13698 / CCUG 18766 / IAM 14443 / JCM 21226 / LMG 7866 / NBRC 102419 / NCTC 12128 / CDC 0568-73).